The following is a 1000-amino-acid chain: SEC23-interacting protein (1000 aa).

Residues Met1–Glu367 form an interaction with SEC23A region. Residues Phe133 to Pro252 are disordered. Residues Ser154–Tyr167 are compositionally biased toward low complexity. Residues Pro207–Pro218 are compositionally biased toward pro residues. The segment covering Ser235 to Pro246 has biased composition (low complexity). An SAM domain is found at Lys644–Leu707. Residues Ala716–Lys748 are disordered. Phosphoserine occurs at positions 737 and 926. The DDHD domain maps to Leu779–Arg989.

It belongs to the PA-PLA1 family. Interacts with SEC23A. As to expression, ubiquitously expressed with stronger levels detected in heart, liver and skeletal muscle.

The protein localises to the cytoplasmic vesicle. The protein resides in the COPII-coated vesicle membrane. Its subcellular location is the endoplasmic reticulum. Functionally, plays a role in the organization of endoplasmic reticulum exit sites. Specifically binds to phosphatidylinositol 3-phosphate (PI(3)P), phosphatidylinositol 4-phosphate (PI(4)P) and phosphatidylinositol 5-phosphate (PI(5)P). The sequence is that of SEC23-interacting protein (SEC23IP) from Homo sapiens (Human).